A 1177-amino-acid chain; its full sequence is DNA-directed RNA polymerase subunit beta' (1177 aa).

4 residues coordinate Zn(2+): cysteine 60, cysteine 62, cysteine 75, and cysteine 78. Residues aspartate 450, aspartate 452, and aspartate 454 each contribute to the Mg(2+) site. Zn(2+) is bound by residues cysteine 795, cysteine 869, cysteine 876, and cysteine 879.

This sequence belongs to the RNA polymerase beta' chain family. As to quaternary structure, the RNAP catalytic core consists of 2 alpha, 1 beta, 1 beta' and 1 omega subunit. When a sigma factor is associated with the core the holoenzyme is formed, which can initiate transcription. It depends on Mg(2+) as a cofactor. Zn(2+) serves as cofactor.

The catalysed reaction is RNA(n) + a ribonucleoside 5'-triphosphate = RNA(n+1) + diphosphate. Functionally, DNA-dependent RNA polymerase catalyzes the transcription of DNA into RNA using the four ribonucleoside triphosphates as substrates. The polypeptide is DNA-directed RNA polymerase subunit beta' (Clostridium botulinum (strain Eklund 17B / Type B)).